The sequence spans 72 residues: MCLLYTHFYHLILNTRRVDSSFFVFSFHLYFLNDNKGMSPLCLSLVGSGLHLSVMHLLFHVFLFLFDSFLRP.

The protein resides in the plastid. It is found in the chloroplast. This is an uncharacterized protein from Oenothera berteroana (Bertero's evening primrose).